The sequence spans 245 residues: 1-(5-phosphoribosyl)-5-[(5-phosphoribosylamino)methylideneamino] imidazole-4-carboxamide isomerase (245 aa).

The active-site Proton acceptor is the D7. The Proton donor role is filled by D129.

Belongs to the HisA/HisF family.

The protein resides in the cytoplasm. It carries out the reaction 1-(5-phospho-beta-D-ribosyl)-5-[(5-phospho-beta-D-ribosylamino)methylideneamino]imidazole-4-carboxamide = 5-[(5-phospho-1-deoxy-D-ribulos-1-ylimino)methylamino]-1-(5-phospho-beta-D-ribosyl)imidazole-4-carboxamide. Its pathway is amino-acid biosynthesis; L-histidine biosynthesis; L-histidine from 5-phospho-alpha-D-ribose 1-diphosphate: step 4/9. This chain is 1-(5-phosphoribosyl)-5-[(5-phosphoribosylamino)methylideneamino] imidazole-4-carboxamide isomerase, found in Erwinia tasmaniensis (strain DSM 17950 / CFBP 7177 / CIP 109463 / NCPPB 4357 / Et1/99).